Reading from the N-terminus, the 510-residue chain is Sphingolipid C9-methyltransferase B (510 aa).

An N-linked (GlcNAc...) asparagine glycan is attached at Asn55. Helical transmembrane passes span 62–82 and 84–104; these read LLGG…GGGA and TFVF…WTYA. The N-linked (GlcNAc...) asparagine glycan is linked to Asn175. S-adenosyl-L-methionine-binding positions include 227-228, 264-272, 290-295, and 320-321; these read YT, MLDIGCGWG, TIAENQ, and YR. N-linked (GlcNAc...) asparagine glycosylation occurs at Asn294.

This sequence belongs to the CFA/CMAS family.

Its subcellular location is the membrane. It carries out the reaction a (4E,8E)-4-sphinga-4,8-dienine ceramide + S-adenosyl-L-methionine = a 9-methyl-(4E,8E)-sphinga-4,8-dienine ceramide + S-adenosyl-L-homocysteine + H(+). Its pathway is lipid metabolism; sphingolipid metabolism. Functionally, catalyzes methylation of the sphingoid base component of glucosylceramides (GluCers) at the C9-position. Sphingolipid C9-methylation requires 4,8-desaturated ceramides as substrates. Glucosylceramides play important roles in growth, differentiation and pathogenicity. The methyl group at the C9-position distinguishes fungal glucosylceramides from those of plants and animals and may thus play a role in host-pathogen interactions enabling the host to recognize the fungal attack and initiate specific defense responses. The chain is Sphingolipid C9-methyltransferase B from Emericella nidulans (strain FGSC A4 / ATCC 38163 / CBS 112.46 / NRRL 194 / M139) (Aspergillus nidulans).